We begin with the raw amino-acid sequence, 255 residues long: Leucyl/phenylalanyl-tRNA--protein transferase (255 aa).

The protein belongs to the L/F-transferase family.

Its subcellular location is the cytoplasm. The enzyme catalyses N-terminal L-lysyl-[protein] + L-leucyl-tRNA(Leu) = N-terminal L-leucyl-L-lysyl-[protein] + tRNA(Leu) + H(+). The catalysed reaction is N-terminal L-arginyl-[protein] + L-leucyl-tRNA(Leu) = N-terminal L-leucyl-L-arginyl-[protein] + tRNA(Leu) + H(+). It catalyses the reaction L-phenylalanyl-tRNA(Phe) + an N-terminal L-alpha-aminoacyl-[protein] = an N-terminal L-phenylalanyl-L-alpha-aminoacyl-[protein] + tRNA(Phe). In terms of biological role, functions in the N-end rule pathway of protein degradation where it conjugates Leu, Phe and, less efficiently, Met from aminoacyl-tRNAs to the N-termini of proteins containing an N-terminal arginine or lysine. This is Leucyl/phenylalanyl-tRNA--protein transferase from Burkholderia pseudomallei (strain 668).